The following is a 100-amino-acid chain: UPF0045 protein MJ1052 (100 aa).

The protein belongs to the UPF0045 family.

In Methanocaldococcus jannaschii (strain ATCC 43067 / DSM 2661 / JAL-1 / JCM 10045 / NBRC 100440) (Methanococcus jannaschii), this protein is UPF0045 protein MJ1052.